A 644-amino-acid chain; its full sequence is Biosynthetic arginine decarboxylase (644 aa).

Residue lysine 113 is modified to N6-(pyridoxal phosphate)lysine. 293 to 303 (FDVGGGLGVDY) provides a ligand contact to substrate.

It belongs to the Orn/Lys/Arg decarboxylase class-II family. SpeA subfamily. Requires Mg(2+) as cofactor. The cofactor is pyridoxal 5'-phosphate.

The enzyme catalyses L-arginine + H(+) = agmatine + CO2. Catalyzes the biosynthesis of agmatine from arginine. This chain is Biosynthetic arginine decarboxylase, found in Pasteurella multocida (strain Pm70).